Reading from the N-terminus, the 373-residue chain is Chaperone protein DnaJ (373 aa).

In terms of domain architecture, J spans 4-69 (NYYEILEISQ…EKRSIYDRYG (66 aa)). Residues 133-210 (GCKKKIDFSY…CHGNGYEEIK (78 aa)) form a CR-type zinc finger. C146, C149, C162, C165, C184, C187, C198, and C201 together coordinate Zn(2+). 4 CXXCXGXG motif repeats span residues 146-153 (CKSCKGSG), 162-169 (CPHCGGKG), 184-191 (CDHCKGSG), and 198-205 (CKTCHGNG).

Belongs to the DnaJ family. Homodimer. Zn(2+) serves as cofactor.

It is found in the cytoplasm. Its function is as follows. Participates actively in the response to hyperosmotic and heat shock by preventing the aggregation of stress-denatured proteins and by disaggregating proteins, also in an autonomous, DnaK-independent fashion. Unfolded proteins bind initially to DnaJ; upon interaction with the DnaJ-bound protein, DnaK hydrolyzes its bound ATP, resulting in the formation of a stable complex. GrpE releases ADP from DnaK; ATP binding to DnaK triggers the release of the substrate protein, thus completing the reaction cycle. Several rounds of ATP-dependent interactions between DnaJ, DnaK and GrpE are required for fully efficient folding. Also involved, together with DnaK and GrpE, in the DNA replication of plasmids through activation of initiation proteins. The chain is Chaperone protein DnaJ from Campylobacter lari (strain RM2100 / D67 / ATCC BAA-1060).